A 660-amino-acid chain; its full sequence is RalBP1-associated Eps domain-containing protein 2 (660 aa).

The region spanning 34 to 147 (EQQCYSELFA…RFMMSKNDGE (114 aa)) is the EH 1 domain. Positions 169 to 208 (EKNSFKRMDDEDKQQETQSPTMSPLASPPSSPPHYQRVPL) are disordered. S254 carries the post-translational modification Phosphoserine. In terms of domain architecture, EH 2 spans 282–373 (QREYYVNQFR…LQPEYLQAAF (92 aa)). The EF-hand domain maps to 315 to 350 (LSIPELSYIWELSDADCDGALTLPEFCAAFHLIVAR). Residues D328, D330, D332, and E339 each contribute to the Ca(2+) site. Positions 433-616 (NEALPKDVSE…KQKKAIQTAI (184 aa)) are disordered. T479 carries the phosphothreonine modification. S493 is modified (phosphoserine). Over residues 512–523 (LPPPPALPPRPC) the composition is skewed to pro residues. The segment at 514–660 (PPPALPPRPC…LEQLRPVTVL (147 aa)) is interaction with RALBP1. The interval 561 to 660 (PPSKPIRRKF…LEQLRPVTVL (100 aa)) is interaction with ASAP1. Over residues 582 to 594 (PSTAASGPASAAT) the composition is skewed to low complexity. A coiled-coil region spans residues 601–657 (VQKQSSKQKKAIQTAIRKNKEANAVLARLNSELQQQLKEVHQERIALENQLEQLRPV).

As to quaternary structure, interacts with EPN1; the interaction is direct. Interacts with EPS15; the interaction is direct. Interacts with EPS15L1. Interacts with RALBP1; can form a ternary complex with activated Ral (RALA or RALB). Interacts with ASAP1; the interaction is direct and this complex can bind paxillin. Also forms a ternary complex with RALBP1 and ASAP1. Interacts with GRB2. Post-translationally, tyrosine-phosphorylated upon stimulation of cells with EGF. Phosphorylation on Tyr-residues induces its association with the EGF receptor probably indirectly through an adapter like GRB2. Expressed at high levels in the cerebrum, cerebellum, lung, kidney, and testis. Weakly expressed in the kidney. Isoform 2 is down-regulated during progression of prostate cancer.

It is found in the cytoplasm. Functionally, involved in ligand-dependent receptor mediated endocytosis of the EGF and insulin receptors as part of the Ral signaling pathway. By controlling growth factor receptors endocytosis may regulate cell survival. Through ASAP1 may regulate cell adhesion and migration. This Homo sapiens (Human) protein is RalBP1-associated Eps domain-containing protein 2 (REPS2).